The following is an 814-amino-acid chain: DNA ligase (814 aa).

NAD(+) contacts are provided by residues 46–50 (DAEYD), 95–96 (SL), and Glu-129. Catalysis depends on Lys-131, which acts as the N6-AMP-lysine intermediate. Residues Arg-152, Glu-189, Lys-305, and Lys-329 each coordinate NAD(+). Residues Cys-434, Cys-437, Cys-458, and Cys-464 each coordinate Zn(2+). Positions 525-548 (LSAQRRSEGEPAPKKPTKKKGEEE) are disordered. In terms of domain architecture, BRCT spans 735-814 (TSAAAFAGKT…DDWLAMLAEA (80 aa)).

The protein belongs to the NAD-dependent DNA ligase family. LigA subfamily. Mg(2+) serves as cofactor. The cofactor is Mn(2+).

It catalyses the reaction NAD(+) + (deoxyribonucleotide)n-3'-hydroxyl + 5'-phospho-(deoxyribonucleotide)m = (deoxyribonucleotide)n+m + AMP + beta-nicotinamide D-nucleotide.. Functionally, DNA ligase that catalyzes the formation of phosphodiester linkages between 5'-phosphoryl and 3'-hydroxyl groups in double-stranded DNA using NAD as a coenzyme and as the energy source for the reaction. It is essential for DNA replication and repair of damaged DNA. This Methylorubrum extorquens (strain PA1) (Methylobacterium extorquens) protein is DNA ligase.